The chain runs to 518 residues: Sugar transport protein MST3 (518 aa).

Topologically, residues 1 to 18 are cytoplasmic; that stretch reads MAGGAVVSTGAGKDYPGK. Residues 19–39 form a helical membrane-spanning segment; sequence LTLFVFFTCVVAATGGLIFGY. The Extracellular portion of the chain corresponds to 40-80; sequence DIGISGGVTSMDPFLRKFFPEVYRKKQMADKNNQYCKYDNQ. Residues 81–101 traverse the membrane as a helical segment; the sequence is LLQTFTSSLYLAALVSSFFAA. Residues 102-117 are Cytoplasmic-facing; sequence TVTRVLGRKWSMFAGG. Residues 118–138 form a helical membrane-spanning segment; sequence LTFLIGAALNGAAENVAMLIV. The Extracellular segment spans residues 139–140; sequence GR. A helical transmembrane segment spans residues 141–161; the sequence is ILLGVGVGFANQSVPVYLSEM. The Cytoplasmic segment spans residues 162-167; the sequence is APARLR. The chain crosses the membrane as a helical span at residues 168 to 188; sequence GMLNIGFQLMITIGILAAELI. Residues 189–202 lie on the Extracellular side of the membrane; the sequence is NYGTAKIKAGWGWR. A helical transmembrane segment spans residues 203–223; the sequence is VSLALAAVPAAIITLGSLFLP. The Cytoplasmic segment spans residues 224–290; that stretch reads DTPNSLIDRG…YRAQLTMAIC (67 aa). Residues 291 to 311 form a helical membrane-spanning segment; sequence IPFFQQLTGINVIMFYAPVLF. Over 312–322 the chain is Extracellular; the sequence is DTLGFKSDASL. The chain crosses the membrane as a helical span at residues 323–343; sequence MSAVITGLVNVFATLVSIFTV. Over 344-351 the chain is Cytoplasmic; it reads DRLGRRKL. The helical transmembrane segment at 352-372 threads the bilayer; it reads FLQGGAQMVVCQVVVGTLIAV. Residues 373 to 387 are Extracellular-facing; sequence KFGTSGIGDIPKGYA. Residues 388–408 form a helical membrane-spanning segment; that stretch reads AVVVLFICMYVAGFAWSWGPL. Over 409 to 427 the chain is Cytoplasmic; that stretch reads GWLVPSEIFPLEIRPAGQS. The chain crosses the membrane as a helical span at residues 428–448; that stretch reads INVSVNMLFTFVIAQAFLTML. Over 449-452 the chain is Extracellular; that stretch reads CHMK. The chain crosses the membrane as a helical span at residues 453–473; that stretch reads FGLFYFFAGWVVIMTVFIALF. Topologically, residues 474–518 are cytoplasmic; that stretch reads LPETKNVPIEEMVLVWKSHWFWRRFIGDHDVHVGANHVSNNKLQP.

This sequence belongs to the major facilitator superfamily. Sugar transporter (TC 2.A.1.1) family. As to expression, highly expressed in roots. Expressed in xylem and sclerenchyma cells of roots. Expressed at low levels in leaves.

The protein resides in the membrane. Mediates active uptake of hexoses by sugar:proton symport. Can transport glucose, xylose and 3-O-methylglucose. May be involved in the accumulation of monosaccharides required for cell wall synthesis during root development. The sequence is that of Sugar transport protein MST3 from Oryza sativa subsp. japonica (Rice).